A 333-amino-acid polypeptide reads, in one-letter code: Fructose-1,6-bisphosphatase class 1 (333 aa).

Glu-92, Asp-113, Leu-115, and Asp-116 together coordinate Mg(2+). Substrate-binding positions include Asp-116–Ser-119, Asn-209, Tyr-242, and Lys-272. Glu-278 contributes to the Mg(2+) binding site.

The protein belongs to the FBPase class 1 family. In terms of assembly, homotetramer. Requires Mg(2+) as cofactor.

Its subcellular location is the cytoplasm. It carries out the reaction beta-D-fructose 1,6-bisphosphate + H2O = beta-D-fructose 6-phosphate + phosphate. It participates in carbohydrate biosynthesis; Calvin cycle. The sequence is that of Fructose-1,6-bisphosphatase class 1 from Chlorobium phaeovibrioides (strain DSM 265 / 1930) (Prosthecochloris vibrioformis (strain DSM 265)).